The primary structure comprises 140 residues: uncharacterized protein (140 aa).

It is found in the mitochondrion. This is an uncharacterized protein from Homo sapiens (Human).